The following is a 262-amino-acid chain: MKIHDFKIKKQEQKKISMLTCYDYPSACIVAESNIDCVLVGDSVAMAVHGHPTTIMATIEMMELHTQAVARGLGKQFLITDLPFLGHKSSQGHTVENVKRLLQAGAQAVKIEGADKDTCQTISHLVNAGIPVMGHIGLTPQSIHQLGGYKVQGKNSEQAETLLQQAATLEQAGCFAVVIECVPQELAKTITDSLVIPTIGIGAGPGTDGQVLVWHDMLGLQTSFNPKFVKKYFRAKDHFIEALNSYVQQVQQMHFPANEHSF.

Positions 42 and 81 each coordinate Mg(2+). 3-methyl-2-oxobutanoate contacts are provided by residues 42–43 (DS), Asp-81, and Lys-110. Glu-112 serves as a coordination point for Mg(2+). Residue Glu-180 is the Proton acceptor of the active site.

This sequence belongs to the PanB family. In terms of assembly, homodecamer; pentamer of dimers. It depends on Mg(2+) as a cofactor.

It localises to the cytoplasm. It catalyses the reaction 3-methyl-2-oxobutanoate + (6R)-5,10-methylene-5,6,7,8-tetrahydrofolate + H2O = 2-dehydropantoate + (6S)-5,6,7,8-tetrahydrofolate. It functions in the pathway cofactor biosynthesis; (R)-pantothenate biosynthesis; (R)-pantoate from 3-methyl-2-oxobutanoate: step 1/2. Its function is as follows. Catalyzes the reversible reaction in which hydroxymethyl group from 5,10-methylenetetrahydrofolate is transferred onto alpha-ketoisovalerate to form ketopantoate. This Legionella pneumophila subsp. pneumophila (strain Philadelphia 1 / ATCC 33152 / DSM 7513) protein is 3-methyl-2-oxobutanoate hydroxymethyltransferase.